A 35-amino-acid polypeptide reads, in one-letter code: GGCLPHNRFCNALSGPRCCSGLKCKELSIWDSRCL.

3 cysteine pairs are disulfide-bonded: Cys3/Cys19, Cys10/Cys24, and Cys18/Cys34. Position 35 is a leucine amide (Leu35).

This sequence belongs to the neurotoxin 01 (U2-agtx) family. Expressed by the venom gland.

The protein resides in the secreted. Its function is as follows. Insect-selective toxin causing rapid but reversible paralysis in crickets. Suppresses the excitatory postsynaptic potentials evoked in lobster neuromuscular synaptic preparations, possibly by blocking the presynaptic calcium channel (Cav). Induces instantaneous reversible paralysis when injected into crickets. The chain is U2-agatoxin-Aop1a from Allagelena opulenta (Funnel weaving spider).